The primary structure comprises 979 residues: Receptor-type tyrosine-protein phosphatase-like N (979 aa).

An N-terminal signal peptide occupies residues 1–34 (MRLPGRPGGPGGSGGLRVLLCLLLLGSRPGGCNA). Residues 35–131 (ISAHGCLFDR…HPRDRSGLVP (97 aa)) form an RESP18 homology domain region. Residues 35–575 (ISAHGCLFDR…RPAHSTSPMR (541 aa)) lie on the Lumenal side of the membrane. Cys53 and Cys62 form a disulfide bridge. Residues 113–127 (IPRLRPPEPHPRDRS) show a composition bias toward basic and acidic residues. Disordered stretches follow at residues 113–171 (IPRL…GAGS), 248–272 (GSKGMFGAHPGHSYGDPPGPPPAQL), 285–332 (SQVP…EQPD), and 391–466 (EQVQ…STRP). A phosphoserine mark is found at Ser308 and Ser309. Residues 400–409 (EPPPPMPSLP) show a composition bias toward pro residues. A sufficient for dimerization of proICA512 region spans residues 449–575 (SPLGQNQPTM…RPAHSTSPMR (127 aa)). Positions 451-466 (LGQNQPTMAGQPSTRP) are enriched in polar residues. N-linked (GlcNAc...) asparagine glycans are attached at residues Asn506 and Asn524. Residues 576-600 (SVLLTLVALAGVAGLLVALAVALCV) form a helical membrane-spanning segment. A sufficient for dimerization of proICA512 region spans residues 601 to 732 (RQHARQRDKE…PNTCATAQGE (132 aa)). Residues 601–979 (RQHARQRDKE…VNAILKALPQ (379 aa)) are Cytoplasmic-facing. The interval 643–680 (NRAEGPPEPSRVSSVSSQFSDAAQASPSSHSSTPSWCE) is disordered. Residues 652-677 (SRVSSVSSQFSDAAQASPSSHSSTPS) show a composition bias toward low complexity. In terms of domain architecture, Tyrosine-protein phosphatase spans 709–969 (LAKEWQALCA…EFALTAVAEE (261 aa)). A Glycyl lysine isopeptide (Lys-Gly) (interchain with G-Cter in SUMO) cross-link involves residue Lys754.

It belongs to the protein-tyrosine phosphatase family. Receptor class 8 subfamily. In terms of assembly, homodimer; shown for the unprocessed protein (proICA512) in the endoplasmic reticulum and resolved during protein maturation as ICA512-TMF seems to be predominantly monomeric in secretory granules; however, ICA512-CCF interacts with ICA512-TMF disrupting the ICA512-TMF:SNTB2 complex. The isolated lumenal RESP18 homology domain has been shown to form disulfide-linked homooligomers. Interacts (via cytoplasmic domain) with phosphorylated SNTB2; this protects PTPRN against cleavage by CAPN1 to produce ICA512-CCF. Dephosphorylation of SNTB2 upon insulin stimulation disrupts the interaction and results in PTPRN cleavage. Interacts with SNX19. ICA512-CCF interacts with PIAS4; in the nucleus. Interacts with STAT5B (phosphorylated); down-regulated by ICA512-CCF sumoylation; ICA512-CCF prevents STAT5B dephosphorylation; ICA512-CCF mediates interaction of STAT5B with PIAS4. Interacts (via RESP18 homology domain) with insulin and proinsulin. Interacts with PTPRN2, PTPRA and PTPRE. In terms of processing, N-glycosylated. O-glycosylated. Post-translationally, subject to proteolytic cleavage at multiple sites. Subject to cleavage on a pair of basic residues. On exocytosis of secretory granules in pancreatic beta-cells ICA512-TMF is transiently inserted in the plasma-membrane and cleaved by mu-type calpain CPN1 to yield ICA512-CCF. In terms of processing, sumoylated at two sites including Lys-754. Sumoylation decreases interaction with STAT5. Detected in pituitary (at protein level).

It is found in the membrane. Its subcellular location is the cytoplasmic vesicle. It localises to the secretory vesicle membrane. The protein resides in the perikaryon. The protein localises to the cell projection. It is found in the axon. Its subcellular location is the synapse. It localises to the cell membrane. The protein resides in the endosome. The protein localises to the nucleus. In terms of biological role, plays a role in vesicle-mediated secretory processes. Required for normal accumulation of secretory vesicles in hippocampus, pituitary and pancreatic islets. Required for the accumulation of normal levels of insulin-containing vesicles and preventing their degradation. Plays a role in insulin secretion in response to glucose stimuli. Required for normal accumulation of the neurotransmitters norepinephrine, dopamine and serotonin in the brain. In females, but not in males, required for normal accumulation and secretion of pituitary hormones, such as luteinizing hormone (LH) and follicle-stimulating hormone (FSH). Required to maintain normal levels of renin expression and renin release. Seems to lack intrinsic enzyme activity. May regulate catalytic active protein-tyrosine phosphatases such as PTPRA through dimerization. ICA512-TMF regulates dynamics and exocytosis of insulin secretory granules (SGs); binding of ICA512-TMF to SNTB2/beta-2-syntrophin is proposed to restrain SGs mobility and exocytosis by tethering them to the actin cytoskeleton depending on UTRN; the function is inhibited by cytoplasmic ICA512-CFF dimerizing with ICA512-TMF and displacing SNTB2. Its function is as follows. ICA512-CCF translocated to the nucleus promotes expression of insulin and other granule-related genes; the function implicates binding to and regulating activity of STAT5B probably by preventing its dephosphorylation and potentially by inducing its sumoylation by recruiting PIAS4. Enhances pancreatic beta-cell proliferation by converging with signaling by STAT5B and STAT3. ICA512-CCF located in the cytoplasm regulates dynamics and exocytosis of insulin secretory granules (SGs) by dimerizing with ICA512-TMF and displacing SNTB2 thus enhancing SGs mobility and exocytosis. This Bos taurus (Bovine) protein is Receptor-type tyrosine-protein phosphatase-like N (PTPRN).